The sequence spans 507 residues: ATP synthase subunit alpha, chloroplastic (507 aa).

170-177 (GDRQTGKT) is an ATP binding site.

Belongs to the ATPase alpha/beta chains family. In terms of assembly, F-type ATPases have 2 components, CF(1) - the catalytic core - and CF(0) - the membrane proton channel. CF(1) has five subunits: alpha(3), beta(3), gamma(1), delta(1), epsilon(1). CF(0) has four main subunits: a, b, b' and c.

It localises to the plastid. The protein localises to the chloroplast thylakoid membrane. The catalysed reaction is ATP + H2O + 4 H(+)(in) = ADP + phosphate + 5 H(+)(out). In terms of biological role, produces ATP from ADP in the presence of a proton gradient across the membrane. The alpha chain is a regulatory subunit. This chain is ATP synthase subunit alpha, chloroplastic, found in Liriodendron tulipifera (Tuliptree).